Consider the following 858-residue polypeptide: Protein translocase subunit SecA (858 aa).

ATP is bound by residues glutamine 85, 103–107 (GEGKT), and aspartate 511. Zn(2+)-binding residues include cysteine 840, cysteine 842, cysteine 851, and cysteine 852.

It belongs to the SecA family. Monomer and homodimer. Part of the essential Sec protein translocation apparatus which comprises SecA, SecYEG and auxiliary proteins SecDF. Other proteins may also be involved. Requires Zn(2+) as cofactor.

It is found in the cell membrane. Its subcellular location is the cytoplasm. The catalysed reaction is ATP + H2O + cellular proteinSide 1 = ADP + phosphate + cellular proteinSide 2.. Its function is as follows. Part of the Sec protein translocase complex. Interacts with the SecYEG preprotein conducting channel. Has a central role in coupling the hydrolysis of ATP to the transfer of proteins into and across the cell membrane, serving as an ATP-driven molecular motor driving the stepwise translocation of polypeptide chains across the membrane. The sequence is that of Protein translocase subunit SecA from Lachnoclostridium phytofermentans (strain ATCC 700394 / DSM 18823 / ISDg) (Clostridium phytofermentans).